The sequence spans 312 residues: Plasminogen activator (312 aa).

An N-terminal signal peptide occupies residues 1-20 (MKKSSIVATIITILSGSANA). Topologically, residues 21-31 (ASSQLIPNISP) are periplasmic. Residues 32–40 (DSFTVAAST) traverse the membrane as a beta stranded segment. Residues 41-70 (GMLSGKSHEMLYDAETGRKISQLDWKIKNV) lie on the Extracellular side of the membrane. Residues 71-80 (AILKGDISWD) form a beta stranded membrane-spanning segment. Topologically, residues 81–84 (PYSF) are periplasmic. Residues 85–94 (LTLNARGWTS) traverse the membrane as a beta stranded segment. Over 95–131 (LASGSGNMDDYDWMNENQSEWTDHSSHPATNVNHANE) the chain is Extracellular. Active-site residues include Asp-104 and Asp-106. Residues 132-140 (YDLNVKGWL) traverse the membrane as a beta stranded segment. Residues 141-145 (LQDEN) are Periplasmic-facing. A beta stranded transmembrane segment spans residues 146-154 (YKAGITAGY). Residues 155-194 (QETRFSWTATGGSYSYNNGAYTGNFPKGVRVIGYNQRFSM) lie on the Extracellular side of the membrane. The chain crosses the membrane as a beta stranded span at residues 195 to 204 (PYIGLAGQYR). The Periplasmic portion of the chain corresponds to 205–207 (IND). A beta stranded membrane pass occupies residues 208 to 216 (FELNALFKF). Over 217–244 (SDWVRAHDNDEHYMRDLTFREKTSGSRY) the chain is Extracellular. Active-site residues include Asp-226 and His-228. Residues 245–255 (YGTVINAGYYV) form a beta stranded membrane-spanning segment. Over 256–258 (TPN) the chain is Periplasmic. Residues 259 to 267 (AKVFAEFTY) form a beta stranded membrane-spanning segment. At 268-301 (SKYDEGKGGTQTIDKNSGDSVSIGGDAAGISNKN) the chain is on the extracellular side. Residues 302–312 (YTVTAGLQYRF) form a beta stranded membrane-spanning segment.

It belongs to the peptidase A26 family.

The protein localises to the cell outer membrane. It catalyses the reaction Converts human Glu-plasminogen to plasmin by cleaving the 560-Arg-|-Val-561 peptide bond that is also hydrolyzed by the mammalian u-plasminogen activator and t-plasminogen activator. Also cleaves arginyl bonds in other proteins.. Requires bacterial lipopolysaccharide (LPS) for activation; addition of LPS to inactive protein reactivates it. In the absence of LPS the active site groove is slightly narrower, and peptide substrate binds deep within the active site groove, displacing the nucleophilic water molecule. In the mammalian host activates (cleaves) plasminogen to generate the serine protease plasmin. Plasmin degrades fibrin clots (fibrinolysis) and facilitates bacterial cell migration, enabling rapid dissemination of bacteria from the initial site of infection. Cleaves host plasminogen to generate plasmin and probably also has autocatalytic activity. Fibrinolytic activity prevails at 37 degrees Celsius whereas coagulase expression predominates at lower temperatures (28 degrees Celsius). Cleaves plasminogen; plasminogen cleavage is much higher than coagulase activity. The sequence is that of Plasminogen activator from Yersinia pestis.